The chain runs to 334 residues: DNA-directed RNA polymerase subunit alpha (334 aa).

Residues 1–234 (MQRSVHELLT…QQLAVFVDFD (234 aa)) form an alpha N-terminal domain (alpha-NTD) region. An alpha C-terminal domain (alpha-CTD) region spans residues 248–334 (IDPILLRPVD…LRGDDRVLGG (87 aa)).

Belongs to the RNA polymerase alpha chain family. As to quaternary structure, homodimer. The RNAP catalytic core consists of 2 alpha, 1 beta, 1 beta' and 1 omega subunit. When a sigma factor is associated with the core the holoenzyme is formed, which can initiate transcription.

It catalyses the reaction RNA(n) + a ribonucleoside 5'-triphosphate = RNA(n+1) + diphosphate. Functionally, DNA-dependent RNA polymerase catalyzes the transcription of DNA into RNA using the four ribonucleoside triphosphates as substrates. The chain is DNA-directed RNA polymerase subunit alpha from Marinobacter nauticus (strain ATCC 700491 / DSM 11845 / VT8) (Marinobacter aquaeolei).